The chain runs to 1460 residues: Collagen alpha-1(I) chain (1460 aa).

The signal sequence occupies residues 1-22 (MFSFVDLRLLLLLAATALLTHG). Positions 23-157 (QEEGQEEDIP…PPGLGGNFAP (135 aa)) are cleaved as a propeptide — N-terminal propeptide. Positions 34–92 (VTCVQNGLRYYDRDVWKPEACRICVCDNGNVLCDDVICDETKNCPGAQVPPGECCPVCP) constitute a VWFC domain. The tract at residues 96–1213 (ASPTDQETTG…KAHDGGRYYR (1118 aa)) is disordered. The span at 134–149 (PGLPGPPGPPGPPGPP) shows a compositional bias: pro residues. Positions 158-174 (QMSYGYDEKSTGGISVP) are nonhelical region (N-terminal). Lysine 166 bears the Allysine mark. Position 167 is a phosphoserine (serine 167). Positions 175-1188 (GPMGPSGPRG…PGPPGPPGPP (1014 aa)) are triple-helical region. Proline 186, proline 189, proline 192, proline 201, proline 204, proline 207, proline 222, proline 237, proline 243, proline 252, and proline 258 each carry 4-hydroxyproline. The span at 194 to 213 (PQGFQGPPGEPGEPGASGPM) shows a compositional bias: low complexity. The segment covering 225–239 (NGDDGEAGKPGRPGE) has biased composition (basic and acidic residues). The residue at position 261 (lysine 261) is a 5-hydroxylysine; alternate. Lysine 261 is a glycosylation site (O-linked (Gal...) hydroxylysine; alternate). A Phosphoserine modification is found at serine 267. Low complexity predominate over residues 275-291 (DAGPAGPKGEPGSPGEN). 4-hydroxyproline is present on residues proline 285, proline 288, proline 294, proline 303, and proline 309. The span at 314–327 (PAGARGNDGATGAA) shows a compositional bias: low complexity. Pro residues predominate over residues 329–341 (PPGPTGPAGPPGF). 4-hydroxyproline occurs at positions 330, 339, 342, 369, 372, 384, 390, 399, 405, 408, and 423. Low complexity predominate over residues 375-414 (AGAAGPAGNPGADGQPGAKGANGAPGIAGAPGFPGARGPS). Lysine 426 bears the 5-hydroxylysine mark. Proline 432, proline 435, proline 447, proline 456, proline 471, proline 477, proline 486, and proline 492 each carry 4-hydroxyproline. Positions 481–490 (GERGGPGSRG) are enriched in gly residues. Residue lysine 501 is modified to 5-hydroxylysine. 4-hydroxyproline is present on residues proline 510, proline 519, proline 525, proline 531, proline 540, proline 543, proline 552, proline 561, proline 567, proline 579, proline 588, proline 597, proline 600, proline 618, proline 636, proline 642, proline 648, proline 654, proline 660, proline 666, proline 678, proline 687, proline 699, proline 711, proline 714, proline 720, proline 726, and proline 735. The span at 534–560 (KGLTGSPGSPGPDGKTGPPGPAGQDGR) shows a compositional bias: low complexity. A compositionally biased stretch (low complexity) spans 569 to 588 (ARGQAGVMGFPGPKGAAGEP). A compositionally biased stretch (low complexity) spans 630–657 (QGPAGSPGFQGLPGPAGPPGEAGKPGEQ). Residues 692–720 (PRGANGAPGNDGAKGDAGAPGAPGSQGAP) show a composition bias toward low complexity. Residues 741–743 (RGD) carry the Cell attachment site motif. Position 747 is a 5-hydroxylysine (lysine 747). 4-hydroxyproline occurs at positions 753, 768, and 774. A compositionally biased stretch (low complexity) spans 780–794 (AGPSGPAGPTGARGA). Serine 783 is modified (phosphoserine). 8 positions are modified to 4-hydroxyproline: proline 795, proline 801, proline 804, proline 813, proline 819, proline 837, proline 846, and proline 855. Over residues 807–834 (AGFAGPPGADGQPGAKGEPGDAGAKGDA) the composition is skewed to low complexity. Residues 836–848 (PPGPAGPTGPPGP) are compositionally biased toward pro residues. Lysine 858 is subject to 5-hydroxylysine. The segment covering 863–879 (SAGPPGATGFPGAAGRV) has biased composition (low complexity). 4-hydroxyproline occurs at positions 867 and 873. At proline 881 the chain carries 3-hydroxyproline. 16 positions are modified to 4-hydroxyproline: proline 882, proline 891, proline 894, proline 915, proline 924, proline 933, proline 942, proline 960, proline 969, proline 972, proline 978, proline 993, proline 999, proline 1005, proline 1014, and proline 1020. Positions 908–917 (ETGPAGRPGE) are enriched in low complexity. Positions 927–951 (AGEKGSPGADGPAGAPGTPGPQGIA) are enriched in low complexity. Over residues 992–1002 (PPGPMGPPGLA) the composition is skewed to pro residues. The span at 1004–1019 (PPGESGREGSPGAEGS) shows a compositional bias: low complexity. Residue lysine 1029 is modified to 5-hydroxylysine. A compositionally biased stretch (pro residues) spans 1038-1053 (AGPPGAPGAPGAPGPV). 4-hydroxyproline is present on residues proline 1041, proline 1044, and proline 1047. A compositionally biased stretch (low complexity) spans 1074–1088 (IGPVGARGPAGPQGP). Residues 1089–1091 (RGD) carry the Cell attachment site motif. Residues 1089 to 1103 (RGDKGETGEQGDRGI) show a composition bias toward basic and acidic residues. Residue lysine 1092 is modified to 5-hydroxylysine. Residue lysine 1104 is modified to 5-hydroxylysine; alternate. An O-linked (Gal...) hydroxylysine; alternate glycan is attached at lysine 1104. 4-hydroxyproline is present on residues proline 1116, proline 1119, proline 1122, proline 1140, and proline 1155. The segment covering 1122–1155 (PGEQGPSGASGPAGPRGPPGSAGSPGKDGLNGLP) has biased composition (low complexity). A 3-hydroxyproline modification is found at proline 1160. Proline 1161 is modified (4-hydroxyproline). Pro residues predominate over residues 1173 to 1188 (VGPPGPPGPPGPPGPP). At proline 1175 the chain carries 3-hydroxyproline. 4-hydroxyproline is present on proline 1176. Proline 1178 is modified (3-hydroxyproline). At proline 1179 the chain carries 4-hydroxyproline. At proline 1181 the chain carries 3-hydroxyproline. 3 positions are modified to 4-hydroxyproline: proline 1182, proline 1185, and proline 1188. Residues 1189-1214 (SGGFDFSFLPQPPQEKAHDGGRYYRA) form a nonhelical region (C-terminal) region. Basic and acidic residues predominate over residues 1203 to 1213 (EKAHDGGRYYR). At lysine 1204 the chain carries Allysine. Residues 1215-1460 (DDANVVRDRD…GMDIGPVCFL (246 aa)) constitute a propeptide, C-terminal propeptide. Positions 1225-1460 (LEVDTTLKSL…GMDIGPVCFL (236 aa)) constitute a Fibrillar collagen NC1 domain. 3 disulfide bridges follow: cysteine 1255–cysteine 1287, cysteine 1295–cysteine 1458, and cysteine 1366–cysteine 1411. 5 residues coordinate Ca(2+): aspartate 1273, asparagine 1275, glutamine 1276, cysteine 1278, and aspartate 1281. An N-linked (GlcNAc...) asparagine glycan is attached at asparagine 1361.

It belongs to the fibrillar collagen family. In terms of assembly, trimers of one alpha 2(I) and two alpha 1(I) chains. Interacts with MRC2. Interacts with TRAM2. Interacts with MFAP4 in a Ca (2+)-dependent manner. Post-translationally, contains mostly 4-hydroxyproline. Proline residues at the third position of the tripeptide repeating unit (G-X-Y) are hydroxylated in some or all of the chains. In terms of processing, contains 3-hydroxyproline at a few sites. This modification occurs on the first proline residue in the sequence motif Gly-Pro-Hyp, where Hyp is 4-hydroxyproline. Lysine residues at the third position of the tripeptide repeating unit (G-X-Y) are 5-hydroxylated in some or all of the chains. Post-translationally, O-glycosylated on hydroxylated lysine residues. The O-linked glycan consists of a Glc-Gal disaccharide.

The protein resides in the secreted. It localises to the extracellular space. Its subcellular location is the extracellular matrix. Its function is as follows. Type I collagen is a member of group I collagen (fibrillar forming collagen). The sequence is that of Collagen alpha-1(I) chain (COL1A1) from Canis lupus familiaris (Dog).